Here is a 456-residue protein sequence, read N- to C-terminus: Chromosomal replication initiator protein DnaA (456 aa).

The tract at residues 1-83 is domain I, interacts with DnaA modulators; the sequence is MTASLWQQCL…LRFDIGNRPH (83 aa). Positions 83–119 are domain II; the sequence is HPVAVARAPARGADPVNNSQKSWESKAEAKPEPNHKS. The segment at 92 to 122 is disordered; that stretch reads ARGADPVNNSQKSWESKAEAKPEPNHKSNTN. Positions 105–117 are enriched in basic and acidic residues; the sequence is WESKAEAKPEPNH. Residues 120 to 336 form a domain III, AAA+ region region; sequence NTNVNYTFEN…GALNRVIANA (217 aa). The ATP site is built by G164, G166, K167, and T168. A domain IV, binds dsDNA region spans residues 337 to 456; sequence NFTGRAINID…YSNLIRTLSS (120 aa).

This sequence belongs to the DnaA family. As to quaternary structure, oligomerizes as a right-handed, spiral filament on DNA at oriC.

It is found in the cytoplasm. Plays an essential role in the initiation and regulation of chromosomal replication. ATP-DnaA binds to the origin of replication (oriC) to initiate formation of the DNA replication initiation complex once per cell cycle. Binds the DnaA box (a 9 base pair repeat at the origin) and separates the double-stranded (ds)DNA. Forms a right-handed helical filament on oriC DNA; dsDNA binds to the exterior of the filament while single-stranded (ss)DNA is stabiized in the filament's interior. The ATP-DnaA-oriC complex binds and stabilizes one strand of the AT-rich DNA unwinding element (DUE), permitting loading of DNA polymerase. After initiation quickly degrades to an ADP-DnaA complex that is not apt for DNA replication. Binds acidic phospholipids. This chain is Chromosomal replication initiator protein DnaA, found in Aeromonas hydrophila subsp. hydrophila (strain ATCC 7966 / DSM 30187 / BCRC 13018 / CCUG 14551 / JCM 1027 / KCTC 2358 / NCIMB 9240 / NCTC 8049).